Reading from the N-terminus, the 172-residue chain is Small ribosomal subunit protein uS5 (172 aa).

The S5 DRBM domain maps to 17-80 (FTEKLIKLNR…ERAKRSMVLF (64 aa)).

This sequence belongs to the universal ribosomal protein uS5 family. In terms of assembly, part of the 30S ribosomal subunit. Contacts proteins S4 and S8.

In terms of biological role, with S4 and S12 plays an important role in translational accuracy. Its function is as follows. Located at the back of the 30S subunit body where it stabilizes the conformation of the head with respect to the body. The chain is Small ribosomal subunit protein uS5 from Treponema pallidum (strain Nichols).